A 169-amino-acid polypeptide reads, in one-letter code: Disulfide bond formation protein B 1 (169 aa).

Residues 1 to 14 lie on the Cytoplasmic side of the membrane; that stretch reads MSEETIRLGRERRY. The helical transmembrane segment at 15–31 threads the bilayer; sequence LVLLGIICLALIGGALY. Topologically, residues 32–49 are periplasmic; sequence MQIVLGEAPCPLCILQRY. Cys-41 and Cys-44 are joined by a disulfide. Residues 50 to 64 form a helical membrane-spanning segment; it reads ALLLIALFAFIGAAM. Residues 65–71 lie on the Cytoplasmic side of the membrane; that stretch reads RTRRSIT. Residues 72–89 form a helical membrane-spanning segment; that stretch reads VFEVLVVICAIAGAGVAG. Residues 90–144 are Periplasmic-facing; it reads HHVYTQFYPAVSCGIDVLQPIVDDLPLAKIFPLGFQVDGFCSTPYPPILGLSLAQ. A disulfide bridge connects residues Cys-102 and Cys-130. A helical transmembrane segment spans residues 145–163; the sequence is WALVAFVLVVILVPLLTSR. Residues 164 to 169 are Cytoplasmic-facing; the sequence is NRKALR.

Belongs to the DsbB family.

Its subcellular location is the cell inner membrane. Functionally, required for disulfide bond formation in some periplasmic proteins. Acts by oxidizing the DsbA protein. This chain is Disulfide bond formation protein B 1, found in Pseudomonas fluorescens (strain Pf0-1).